A 251-amino-acid chain; its full sequence is Anamorsin homolog (251 aa).

The segment at 1-154 (MINFSNTLVI…AENPDFNKSD (154 aa)) is N-terminal SAM-like domain. Residues 155-167 (DDNNLVSSDEEIY) are linker. The [2Fe-2S] cluster site is built by C170, C181, C184, and C186. Residues 170 to 186 (CEDKKKVVNRVCDNCTC) form a fe-S binding site A region. Residues C216, C219, C227, and C230 each contribute to the [4Fe-4S] cluster site. Short sequence motifs (cx2C motif) lie at residues 216–219 (CGNC) and 227–230 (CGSC). A fe-S binding site B region spans residues 216–230 (CGNCYLGDAFRCGSC).

It belongs to the anamorsin family. Monomer. [2Fe-2S] cluster is required as a cofactor. Requires [4Fe-4S] cluster as cofactor.

Its subcellular location is the cytoplasm. The protein localises to the mitochondrion intermembrane space. Component of the cytosolic iron-sulfur (Fe-S) protein assembly (CIA) machinery. Required for the maturation of extramitochondrial Fe-S proteins. Part of an electron transfer chain functioning in an early step of cytosolic Fe-S biogenesis, facilitating the de novo assembly of a [4Fe-4S] cluster on the cytosolic Fe-S scaffold complex. Electrons are transferred from NADPH via a FAD- and FMN-containing diflavin oxidoreductase. Together with the diflavin oxidoreductase, also required for the assembly of the diferric tyrosyl radical cofactor of ribonucleotide reductase (RNR), probably by providing electrons for reduction during radical cofactor maturation in the catalytic small subunit. In Plasmodium yoelii yoelii, this protein is Anamorsin homolog.